The chain runs to 264 residues: Tritrans,polycis-undecaprenyl-diphosphate synthase (geranylgeranyl-diphosphate specific) (264 aa).

The active site involves Asp-43. Asp-43 contacts Mg(2+). Substrate-binding positions include 44 to 47 (GNRR), Trp-48, His-60, and 88 to 90 (STE). The active-site Proton acceptor is Asn-91. Substrate-binding positions include Phe-92, Arg-94, Arg-213, and 219–221 (RIS). Glu-232 is a Mg(2+) binding site.

This sequence belongs to the UPP synthase family. Homodimer. Mg(2+) serves as cofactor.

The enzyme catalyses geranylgeranyl diphosphate + 7 isopentenyl diphosphate = tri-trans,hepta-cis-undecaprenyl diphosphate + 7 diphosphate. Catalyzes the sequential condensation of isopentenyl diphosphate (IPP) with geranylgeranyl diphosphate (GGPP) to yield (2Z,6Z,10Z,14Z,18Z,22Z,26Z,30E,34E,38E)-undecaprenyl diphosphate (tritrans,heptacis-UPP). It is probably the precursor of glycosyl carrier lipids. The sequence is that of Tritrans,polycis-undecaprenyl-diphosphate synthase (geranylgeranyl-diphosphate specific) from Pyrococcus furiosus (strain ATCC 43587 / DSM 3638 / JCM 8422 / Vc1).